A 1118-amino-acid polypeptide reads, in one-letter code: Sodium-driven chloride bicarbonate exchanger (1118 aa).

Disordered regions lie at residues 1–23 (MEIK…EEAV), 58–96 (GRKS…DTPS), 245–312 (KQSE…PPHQ), and 457–476 (NGTA…GPEL). Over 1 to 509 (MEIKDQGAQM…DFRDAFSLQC (509 aa)) the chain is Cytoplasmic. Positions 59 to 76 (RKSHRRHRHRGHKHRKRD) are enriched in basic residues. Over residues 77 to 90 (RERDSGLEDGRESP) the composition is skewed to basic and acidic residues. A Phosphoserine modification is found at serine 89. Residue threonine 94 is modified to Phosphothreonine. Residues 248 to 264 (EPNSMDKNAGQVVSPQS) are compositionally biased toward polar residues. Serine 276 carries the phosphoserine modification. The chain crosses the membrane as a helical span at residues 510–530 (LASFLFLYCACMSPVITFGGL). Topologically, residues 531–538 (LGEATEGR) are extracellular. Residues 539–559 (ISAIESLFGASMTGIAYSLFG) form a helical membrane-spanning segment. Residues 560-562 (GQP) are Cytoplasmic-facing. The chain crosses the membrane as a helical span at residues 563-583 (LTILGSTGPVLVFEKILFKFC). The Extracellular portion of the chain corresponds to 584–596 (KEYGLSYLSLRAS). The chain crosses the membrane as a helical span at residues 597-617 (IGLWTATLCIILVATDASSLV). Residues 618 to 626 (CYITRFTEE) are Cytoplasmic-facing. A helical membrane pass occupies residues 627–647 (AFASLICIIFIYEALEKLFEL). At 648–720 (SEAYPINMHN…VGRACGHDHP (73 aa)) the chain is on the extracellular side. Residues asparagine 674, asparagine 677, asparagine 687, and asparagine 697 are each glycosylated (N-linked (GlcNAc...) asparagine). A helical membrane pass occupies residues 721 to 741 (YVPDVLFWSVILFFSTVTLSA). Residues 742-762 (TLKQFKTSRYFPTKVRSIVSD) are Cytoplasmic-facing. A helical membrane pass occupies residues 763 to 783 (FAVFLTILCMVLIDYAIGIPS). Topologically, residues 784 to 809 (PKLQVPSVFKPTRDDRGWFVTPLGPN) are extracellular. Residues 810 to 830 (PWWTVIAAIIPALLCTILIFM) form a helical membrane-spanning segment. At 831–855 (DQQITAVIINRKEHKLKKGCGYHLD) the chain is on the cytoplasmic side. A helical transmembrane segment spans residues 856–876 (LLMVAVMLGVCSIMGLPWFVA). The Extracellular portion of the chain corresponds to 877–912 (ATVLSITHVNSLKLESECSAPGEQPKFLGIREQRVT). A helical membrane pass occupies residues 913-933 (GLMIFILMGSSVFMTSILKFI). Topologically, residues 934–935 (PM) are cytoplasmic. Residues 936–956 (PVLYGVFLYMGASSLKGIQFF) traverse the membrane as a helical segment. At 957–998 (DRIKLFWMPAKHQPDFIYLRHVPLRKVHLFTIIQMSCLGLLW) the chain is on the extracellular side. The helical transmembrane segment at 999-1019 (IIKVSRAAIVFPMMVLALVFV) threads the bilayer. The Cytoplasmic portion of the chain corresponds to 1020–1118 (RKLMDLLFTK…SSFPSKSSPS (99 aa)). Phosphoserine occurs at positions 1057 and 1085.

Belongs to the anion exchanger (TC 2.A.31) family. Predominantly expressed in the brain.

The protein localises to the basolateral cell membrane. Its subcellular location is the apical cell membrane. It is found in the cell projection. It localises to the dendrite. The protein resides in the axon. The protein localises to the perikaryon. Its subcellular location is the presynapse. It is found in the postsynapse. It catalyses the reaction 2 hydrogencarbonate(out) + chloride(in) + Na(+)(out) = 2 hydrogencarbonate(in) + chloride(out) + Na(+)(in). In terms of biological role, sodium/bicarbonate cotransporter which plays an important role in regulating intracellular pH. Has been shown to act as a sodium/bicarbonate cotransporter in exchange for intracellular chloride. Has also been shown to act as a sodium/biocarbonate cotransporter which does not couple net influx of bicarbonate to net efflux of chloride, with the observed chloride efflux being due to chloride self-exchange. Controls neuronal pH and may contribute to the secretion of cerebrospinal fluid. Acting on presynaptic intracellular pH, it promotes GABA release, reduces the excitability of CA1 pyramidal neurons, and modulates short-term synaptic plasticity. Required in retinal cells to maintain normal pH which is necessary for normal vision. In the kidney, likely to mediate bicarbonate reclamation in the apical membrane of the proximal tubules. The polypeptide is Sodium-driven chloride bicarbonate exchanger (Homo sapiens (Human)).